Here is a 389-residue protein sequence, read N- to C-terminus: Lipid-A-disaccharide synthase (389 aa).

Belongs to the LpxB family.

It catalyses the reaction a lipid X + a UDP-2-N,3-O-bis[(3R)-3-hydroxyacyl]-alpha-D-glucosamine = a lipid A disaccharide + UDP + H(+). The protein operates within bacterial outer membrane biogenesis; LPS lipid A biosynthesis. Its function is as follows. Condensation of UDP-2,3-diacylglucosamine and 2,3-diacylglucosamine-1-phosphate to form lipid A disaccharide, a precursor of lipid A, a phosphorylated glycolipid that anchors the lipopolysaccharide to the outer membrane of the cell. The protein is Lipid-A-disaccharide synthase of Paraburkholderia phytofirmans (strain DSM 17436 / LMG 22146 / PsJN) (Burkholderia phytofirmans).